The chain runs to 250 residues: Mycofactocin precursor peptide peptidase (250 aa).

The a divalent metal cation site is built by glutamate 38, histidine 40, aspartate 49, histidine 127, and glutamate 166.

This sequence belongs to the creatininase superfamily. Homooctamer. Fe(2+) serves as cofactor. The cofactor is Zn(2+).

It carries out the reaction [mycofactocin precursor peptide]-C-terminal glycyl-N-{5-[(4-hydroxyphenyl)methyl]-4,4-dimethyl-2-oxopyrrolidin-3-yl}acetamide + H2O = [mycofactocin precursor peptide]-C-terminal glycine + 3-amino-5-[(4-hydroxyphenyl)methyl]-4,4-dimethyl-2-pyrrolidin-2-one. Peptidase involved in the biosynthesis of the enzyme cofactor mycofactocin (MFT). Catalyzes cleavage of the MftC-modified MftA peptide to liberate its final two residues, which consist of a cross-linked valine-decarboxylated tyrosine dipeptide (named 3-amino-5-[(4-hydroxyphenyl)methyl]-4,4-dimethyl-2-pyrrolidin-2-one or ADHP). The sequence is that of Mycofactocin precursor peptide peptidase from Mycobacterium ulcerans (strain Agy99).